A 186-amino-acid polypeptide reads, in one-letter code: Trafficking protein particle complex subunit 3 (186 aa).

This sequence belongs to the TRAPP small subunits family. BET3 subfamily. In terms of assembly, homodimer. Part of the multisubunit TRAPP (transport protein particle) complex.

Its subcellular location is the golgi apparatus. It is found in the cis-Golgi network. The protein resides in the endoplasmic reticulum. May play a role in vesicular transport from endoplasmic reticulum to Golgi. This chain is Trafficking protein particle complex subunit 3 (trappc3), found in Dictyostelium discoideum (Social amoeba).